The chain runs to 1044 residues: MRYRASALGSDGVRVTMESALTARDRVGVQDFVLLENFTSEAAFIENLRRRFRENLIYTYIGPVLVSVNPYRDLQIYTRQHMERYRGVSFYEVPPHLFAVADTVYRALRTERRDQAVMISGESGAGKTEATKRLLQFYAETCPAPERGGAVRDRLLQSNPVLEAFGNAKTLRNDNSSRFGKYMDVQFDFKGAPVGGHILSYLLEKSRVVHQNHGERNFHVFYQLLEGGEEEALRRLGLERNPQSYLYLVKGQCAKVSSINDKSDWKVVRKALSVIDFTEDEVEDLLSIVASVLHLGNIHFAADEDSNAQVTTENQLKYLTRLLGVEGTTLREALTHRKIIAKGEELLSPLNLEQAAYARDALAKAVYSRTFTWLVRKINRSLASKDAESPSWRSTTVLGLLDIYGFEVFQHNSFEQFCINYCNEKLQQLFIELTLKSEQEEYEAEGIAWEPVQYFNNKIICDLVEEKFKGIISILDEECLRPGEATDLTFLEKLEDTIKHHPHFLTHKLADQKTRKSLDRGEFRLLHYAGEVTYSVTGFLDKNNDLLFRNLKETMCSSTNPIMAQCFDKSELSDKKRPETVATQFKMSLLQLVEILRSKEPAYIRCIKPNDAKQPGRFDEVLIRHQVKYLGLMENLRVRRAGFAYRRKYEAFLQRYKSLCPETWPVWTGRPQDGVAVLVRHLGYKPEEYKMGRTKIFIRFPKTLFATEDSLEVRRQSLATKIQAAWRGFHWRQKFLRVKRSAICIQSWWRGTLGRRKAAKRKWAAQTIRRLIRGFILRHAPRCPENAFFLDHVRTSFLLNLRRQLPRNVLDTSWPTPPPALREASELLRELCMKNMVWKYCRSISPEWKQQLQQKAVASEIFKGKKDNYPQSVPRLFISTRLGTEEISPRVLQALGSEPIQYAVPVVKYDRKGYKPRSRQLLLTPSAVVIVEDAKVKQRIDYANLTGISVSSLSDSLFVLHVQREDSKQKGDVVLQSDHVIETLTKTALSADRVNNININQGSITFAGGPGRDGIIDFTSGSELLITKAKNGHLAVVAPRLNSR.

The region spanning 28–712 (GVQDFVLLEN…TLFATEDSLE (685 aa)) is the Myosin motor domain. ATP-binding positions include asparagine 69, tyrosine 77, 120 to 129 (SGESGAGKTE), and 173 to 177 (NDNSS). Residue lysine 364 is modified to N6-methyllysine. The residue at position 389 (serine 389) is a Phosphoserine. Lysine 467 is modified (N6-acetyllysine). Phosphoserine is present on serine 517. Positions 589 to 611 (LLQLVEILRSKEPAYIRCIKPND) are actin-binding. 2 consecutive IQ domains span residues 715–744 (RQSL…SAIC) and 738–767 (VKRS…AAQT). Residues serine 845 and serine 1022 each carry the phosphoserine modification. In terms of domain architecture, TH1 spans 866–1040 (KDNYPQSVPR…NGHLAVVAPR (175 aa)).

It belongs to the TRAFAC class myosin-kinesin ATPase superfamily. Myosin family. As to quaternary structure, interacts (via its IQ motifs) with CABP1 and CIB1; the interaction with CABP1 and CIB1 is calcium-dependent. Interacts (via tail domain) with PLEKHB1 (via PH domain); the interaction is not affected by the presence or absence of calcium and CALM. Interacts with POLR1A. Interacts with POLR2A. Component of the B-WICH complex, at least composed of SMARCA5/SNF2H, BAZ1B/WSTF, SF3B1, DEK, MYO1C, ERCC6, MYBBP1A and DDX21. Interacts (via its IQ motifs) with CALM; this precludes interaction with YWHAB. Interacts with YWHAB; this precludes interaction with CALM. Interacts with RPS6. Interacts with actin. Interacts with LLPH. Interacts with GLUT4. Interacts (via its IQ motifs) with SH3BGRL3; the interaction is dependent on calcium and takes place at membrane ruffles.

It is found in the cytoplasm. The protein resides in the nucleus. The protein localises to the cell cortex. Its subcellular location is the cell projection. It localises to the stereocilium membrane. It is found in the cytoplasmic vesicle. The protein resides in the ruffle membrane. In terms of biological role, myosins are actin-based motor molecules with ATPase activity. Unconventional myosins serve in intracellular movements. Their highly divergent tails are presumed to bind to membranous compartments, which would be moved relative to actin filaments. Involved in glucose transporter recycling in response to insulin by regulating movement of intracellular GLUT4-containing vesicles to the plasma membrane. Component of the hair cell's (the sensory cells of the inner ear) adaptation-motor complex. Acts as a mediator of adaptation of mechanoelectrical transduction in stereocilia of vestibular hair cells. Binds phosphoinositides and links the actin cytoskeleton to cellular membranes. The chain is Unconventional myosin-Ic (Myo1c) from Rattus norvegicus (Rat).